The primary structure comprises 747 residues: ATP-dependent RNA helicase DBP7 (747 aa).

Disordered regions lie at residues M1–S102 and S111–P130. The span at S15–Q24 shows a compositional bias: polar residues. Composition is skewed to basic and acidic residues over residues S75–K96 and S111–T123. The short motif at D135–K164 is the Q motif element. The Helicase ATP-binding domain occupies P168–I363. Position 181 to 188 (A181 to T188) interacts with ATP. Residues D295–D298 carry the DEAD box motif. The 226-residue stretch at T401–K626 folds into the Helicase C-terminal domain. The segment at K700–K729 is disordered. The segment covering T712–K728 has biased composition (basic and acidic residues).

It belongs to the DEAD box helicase family. DDX31/DBP7 subfamily.

The protein localises to the nucleus. It localises to the nucleolus. It catalyses the reaction ATP + H2O = ADP + phosphate + H(+). Its function is as follows. ATP-binding RNA helicase involved in the biogenesis of 60S ribosomal subunits and is required for the normal formation of 25S and 5.8S rRNAs. The sequence is that of ATP-dependent RNA helicase DBP7 (DBP7) from Meyerozyma guilliermondii (strain ATCC 6260 / CBS 566 / DSM 6381 / JCM 1539 / NBRC 10279 / NRRL Y-324) (Yeast).